Consider the following 315-residue polypeptide: L-lactate dehydrogenase (315 aa).

NAD(+)-binding positions include Val17, Asp38, Lys43, Tyr69, and 83–84; that span reads GA. Residues Gln86 and Arg92 each coordinate substrate. NAD(+) is bound by residues Ser105, 122–124, and Ser147; that span reads ATN. Substrate is bound at residue 124–127; the sequence is NPVD. 152 to 155 lines the substrate pocket; the sequence is DTAR. Beta-D-fructose 1,6-bisphosphate-binding residues include Arg157 and His172. His179 (proton acceptor) is an active-site residue. Tyr223 carries the phosphotyrosine modification. Substrate is bound at residue Thr232.

The protein belongs to the LDH/MDH superfamily. LDH family. As to quaternary structure, homotetramer.

It is found in the cytoplasm. It carries out the reaction (S)-lactate + NAD(+) = pyruvate + NADH + H(+). It participates in fermentation; pyruvate fermentation to lactate; (S)-lactate from pyruvate: step 1/1. With respect to regulation, allosterically activated by fructose 1,6-bisphosphate (FBP). Functionally, catalyzes the conversion of lactate to pyruvate. This Macrococcus caseolyticus (strain JCSC5402) (Macrococcoides caseolyticum) protein is L-lactate dehydrogenase.